The following is a 170-amino-acid chain: CASP-like protein 2D1 (170 aa).

Over 1–4 the chain is Cytoplasmic; it reads MLKL. A helical membrane pass occupies residues 5 to 25; it reads LDFSLRLSVIPLSVATIWLTV. At 26 to 47 the chain is on the extracellular side; sequence TNKQDNSIYGYLKYSDLTGLKY. A helical membrane pass occupies residues 48–68; sequence MVFISGICASYAFIAAVSTWI. Topologically, residues 69-83 are cytoplasmic; it reads RCIVTKTWLFFVSDQ. Residues 84 to 104 form a helical membrane-spanning segment; sequence IVAYLMVTSGTAVLEILYLAY. At 105–127 the chain is on the extracellular side; the sequence is NGDREVSWSEACTSYGKFCYRMK. A helical membrane pass occupies residues 128 to 148; sequence LAVILHALALSCFIILAVISA. Residues 149–170 are Cytoplasmic-facing; the sequence is YRAFSIFEPPLVPSKVVEEDRA.

This sequence belongs to the Casparian strip membrane proteins (CASP) family. Homodimer and heterodimers.

The protein resides in the cell membrane. This chain is CASP-like protein 2D1, found in Populus trichocarpa (Western balsam poplar).